Reading from the N-terminus, the 306-residue chain is MGNLVIGSRGSELALWQANHIKERLKKECSIESEIQIVKTKGDKILDTPLNKIGGKGLFTKELEELLLKGEIDLAVHSLKDVPVVFEKGLDLACITKRADVRDTFLSVKFPDLMSLPKGAKVGTTSLRRSMQLKLKRQDLDTESLRGNVQTRLKKLECGEFDAIILAEAGLCRLEIQGAKYRKAFSVEEMIPSMGQGALGVEMLKSHKHFATLQKLNDEESAFCCHLERAFVKGLNGGCQIPIGVHASLMGDRVKIRAVLGLPNGKEVIAKERQGDKTKAFDLVQELLEAFLQSGAKEILEKAQLF.

C239 carries the post-translational modification S-(dipyrrolylmethanemethyl)cysteine.

The protein belongs to the HMBS family. Monomer. Dipyrromethane serves as cofactor.

The enzyme catalyses 4 porphobilinogen + H2O = hydroxymethylbilane + 4 NH4(+). Its pathway is porphyrin-containing compound metabolism; protoporphyrin-IX biosynthesis; coproporphyrinogen-III from 5-aminolevulinate: step 2/4. Tetrapolymerization of the monopyrrole PBG into the hydroxymethylbilane pre-uroporphyrinogen in several discrete steps. The protein is Porphobilinogen deaminase of Helicobacter pylori (strain Shi470).